A 908-amino-acid polypeptide reads, in one-letter code: Protein O-mannosyltransferase 1 (908 aa).

2 disordered regions span residues 1-85 (MYNN…SAIN) and 115-160 (GSVE…SGSR). The span at 21-31 (QRRKTTTRSRS) shows a compositional bias: basic residues. Composition is skewed to polar residues over residues 39–54 (CTSENVIEKNQTNGAQ) and 132–149 (LTATPTTTPKQASPSPTI). The chain crosses the membrane as a helical span at residues 190–210 (FTVNLSIDLFSWTLFLLAFCT). A glycan (N-linked (GlcNAc...) asparagine) is linked at Asn-265. 5 consecutive transmembrane segments (helical) span residues 279-299 (VPIFWFRFIPALCGSLLAPAV), 311-328 (WAAALGGLLVVLDNSLLT), 331-351 (RFVLMESMLLLASTLGIACLL), 370-390 (AGVLLACAGAVKYIGFLALAL), and 418-438 (LSRLLLFVGIPIAVYIGVFYV). 3 consecutive MIR domains span residues 473–534 (PLAV…VKRP), 545–602 (PDVI…VEIL), and 608–664 (GDSW…VEEH). The next 4 helical transmembrane spans lie at 749–769 (VLIWYTASAGILVYATLLAFY), 788–808 (FLMAGDTFFVGYMMHYLPYYF), 813–833 (LFLHNYLPAFVFKLLLLCFVV), and 857–877 (LALLLWLLAVGSVFVKFLPLS).

Belongs to the glycosyltransferase 39 family. Interacts with tw/POMT2.

Its subcellular location is the endoplasmic reticulum membrane. It catalyses the reaction a di-trans,poly-cis-dolichyl beta-D-mannosyl phosphate + L-seryl-[protein] = 3-O-(alpha-D-mannosyl)-L-seryl-[protein] + a di-trans,poly-cis-dolichyl phosphate + H(+). The enzyme catalyses a di-trans,poly-cis-dolichyl beta-D-mannosyl phosphate + L-threonyl-[protein] = 3-O-(alpha-D-mannosyl)-L-threonyl-[protein] + a di-trans,poly-cis-dolichyl phosphate + H(+). It functions in the pathway protein modification; protein glycosylation. In terms of biological role, rt/POMT1 and tw/POMT2 function as a protein O-mannosyltransferase in association with each other to generate and maintain normal muscle development. The chain is Protein O-mannosyltransferase 1 from Drosophila pseudoobscura pseudoobscura (Fruit fly).